The primary structure comprises 86 residues: Mu-theraphotoxin-Hhn1b 3 (86 aa).

The signal sequence occupies residues 1–21; it reads MKASMFLALTGLALLFVVCYA. The propeptide occupies 22-49; that stretch reads SESEEKEFSNELLSSVLAVDDNSKGEER. 3 cysteine pairs are disulfide-bonded: Cys-51/Cys-66, Cys-58/Cys-73, and Cys-65/Cys-80. Ile-84 carries the post-translational modification Isoleucine amide.

It belongs to the neurotoxin 10 (Hwtx-1) family. 22 (Htx-4) subfamily. Monomer. As to expression, expressed by the venom gland.

The protein localises to the secreted. Functionally, neurotoxin. Selectively blocks neuronal tetrodotoxin-sensitive voltage-gated sodium channels (Nav) with an IC(50) of 44.6 nM. Does not affect tetrodotoxin-resistant voltage-gated sodium channels or calcium channels. In Cyriopagopus hainanus (Chinese bird spider), this protein is Mu-theraphotoxin-Hhn1b 3.